We begin with the raw amino-acid sequence, 137 residues long: Large ribosomal subunit protein uL16 (137 aa).

It belongs to the universal ribosomal protein uL16 family. As to quaternary structure, part of the 50S ribosomal subunit.

Functionally, binds 23S rRNA and is also seen to make contacts with the A and possibly P site tRNAs. The chain is Large ribosomal subunit protein uL16 from Alcanivorax borkumensis (strain ATCC 700651 / DSM 11573 / NCIMB 13689 / SK2).